Consider the following 237-residue polypeptide: Phosphoribosylaminoimidazole-succinocarboxamide synthase (237 aa).

Belongs to the SAICAR synthetase family.

It carries out the reaction 5-amino-1-(5-phospho-D-ribosyl)imidazole-4-carboxylate + L-aspartate + ATP = (2S)-2-[5-amino-1-(5-phospho-beta-D-ribosyl)imidazole-4-carboxamido]succinate + ADP + phosphate + 2 H(+). Its pathway is purine metabolism; IMP biosynthesis via de novo pathway; 5-amino-1-(5-phospho-D-ribosyl)imidazole-4-carboxamide from 5-amino-1-(5-phospho-D-ribosyl)imidazole-4-carboxylate: step 1/2. This is Phosphoribosylaminoimidazole-succinocarboxamide synthase from Methanosarcina mazei (strain ATCC BAA-159 / DSM 3647 / Goe1 / Go1 / JCM 11833 / OCM 88) (Methanosarcina frisia).